A 515-amino-acid chain; its full sequence is Bifunctional purine biosynthesis protein PurH (515 aa).

Positions 1-145 (MTKRALISVS…KNHASVTVVV (145 aa)) constitute an MGS-like domain.

It belongs to the PurH family.

It carries out the reaction (6R)-10-formyltetrahydrofolate + 5-amino-1-(5-phospho-beta-D-ribosyl)imidazole-4-carboxamide = 5-formamido-1-(5-phospho-D-ribosyl)imidazole-4-carboxamide + (6S)-5,6,7,8-tetrahydrofolate. The catalysed reaction is IMP + H2O = 5-formamido-1-(5-phospho-D-ribosyl)imidazole-4-carboxamide. Its pathway is purine metabolism; IMP biosynthesis via de novo pathway; 5-formamido-1-(5-phospho-D-ribosyl)imidazole-4-carboxamide from 5-amino-1-(5-phospho-D-ribosyl)imidazole-4-carboxamide (10-formyl THF route): step 1/1. It functions in the pathway purine metabolism; IMP biosynthesis via de novo pathway; IMP from 5-formamido-1-(5-phospho-D-ribosyl)imidazole-4-carboxamide: step 1/1. This Streptococcus uberis (strain ATCC BAA-854 / 0140J) protein is Bifunctional purine biosynthesis protein PurH.